The chain runs to 573 residues: Urease subunit alpha (573 aa).

Residues 136–573 enclose the Urease domain; sequence GAIDCHVHLI…LPMAQRYFLF (438 aa). Ni(2+) contacts are provided by histidine 141, histidine 143, and lysine 224. An N6-carboxylysine modification is found at lysine 224. Position 226 (histidine 226) interacts with substrate. 2 residues coordinate Ni(2+): histidine 253 and histidine 279. The Proton donor role is filled by histidine 327. Aspartate 367 serves as a coordination point for Ni(2+).

Belongs to the metallo-dependent hydrolases superfamily. Urease alpha subunit family. In terms of assembly, heterotrimer of UreA (gamma), UreB (beta) and UreC (alpha) subunits. Three heterotrimers associate to form the active enzyme. It depends on Ni cation as a cofactor. In terms of processing, carboxylation allows a single lysine to coordinate two nickel ions.

The protein localises to the cytoplasm. The enzyme catalyses urea + 2 H2O + H(+) = hydrogencarbonate + 2 NH4(+). The protein operates within nitrogen metabolism; urea degradation; CO(2) and NH(3) from urea (urease route): step 1/1. This chain is Urease subunit alpha, found in Mycolicibacterium vanbaalenii (strain DSM 7251 / JCM 13017 / BCRC 16820 / KCTC 9966 / NRRL B-24157 / PYR-1) (Mycobacterium vanbaalenii).